Here is a 395-residue protein sequence, read N- to C-terminus: Renin (395 aa).

A signal peptide spans 1-21 (MLRSWEFVLLISCFLCFSSDA). A propeptide spans 22 to 43 (LQRISLKKMPSIRETLQEMGMK) (activation peptide). The N-linked (GlcNAc...) asparagine glycan is linked to Asn64. Residues 79–392 (YYGEISIGTP…DRQNNRIGFA (314 aa)) enclose the Peptidase A1 domain. Asp97 is an active-site residue. 2 disulfides stabilise this stretch: Cys110–Cys117 and Cys274–Cys278. Asp283 is a catalytic residue. Residues Cys316 and Cys351 are joined by a disulfide bond.

This sequence belongs to the peptidase A1 family. Post-translationally, N-glycosylated. As to expression, expressed by the venom gland (at protein level).

The protein resides in the secreted. The enzyme catalyses Cleavage of Leu-|-Xaa bond in angiotensinogen to generate angiotensin I.. Its activity is regulated as follows. Inhibited completely by aspartyl protease inhibitor pepstatin A, but not by the serine- or metalloproteinase inhibitors PMSF or EDTA. Functionally, renin is a highly specific endopeptidase, whose only known function is to generate angiotensin I from angiotensinogen in the plasma, initiating a cascade of reactions that produce an elevation of blood pressure and increased sodium retention by the kidney. This protein is also found in snake venom and shown to specifically cleave human and porcine angiotensinogen into angiotensin I. It does not have general protease activity, no cleavage of alpha or beta casein. May be directly responsible for elevation of blood pressure in the victims of envenomation. In Echis ocellatus (Ocellated saw-scaled viper), this protein is Renin.